The following is a 744-amino-acid chain: Biotin sulfoxide reductase (744 aa).

Ser121 is a Mo-bis(molybdopterin guanine dinucleotide) binding site.

The protein belongs to the prokaryotic molybdopterin-containing oxidoreductase family. Mo-bis(molybdopterin guanine dinucleotide) is required as a cofactor.

This enzyme may serve as a scavenger, allowing the cell to utilize biotin sulfoxide as a biotin source. It reduces a spontaneous oxidation product of biotin, D-biotin D-sulfoxide (BSO or BDS), back to biotin. The chain is Biotin sulfoxide reductase from Cereibacter sphaeroides (Rhodobacter sphaeroides).